The following is a 358-amino-acid chain: Oligopeptide transport ATP-binding protein OppD (358 aa).

One can recognise an ABC transporter domain in the interval 8 to 259 (LEVKDLAISF…PRHPYTWGLL (252 aa)). Residue 44 to 51 (GESGSGKS) participates in ATP binding.

It belongs to the ABC transporter superfamily. In terms of assembly, the complex is composed of two ATP-binding proteins (OppD and OppF), two transmembrane proteins (OppB and OppC) and a solute-binding protein (OppA).

It is found in the cell membrane. It catalyses the reaction a [peptide](out) + ATP + H2O = a [peptide](in) + ADP + phosphate + H(+). Functionally, part of the ABC transporter complex OppABCDF involved in the uptake of oligopeptides. Probably responsible for energy coupling to the transport system. Required for sporulation and genetic competence. The polypeptide is Oligopeptide transport ATP-binding protein OppD (Bacillus subtilis (strain 168)).